The following is a 451-amino-acid chain: Oxygen-independent coproporphyrinogen III oxidase (451 aa).

The region spanning 45 to 278 (IPAGAAISLY…FETARELFLA (234 aa)) is the Radical SAM core domain. Position 54 (Tyr54) interacts with S-adenosyl-L-methionine. 2 residues coordinate [4Fe-4S] cluster: Cys60 and Cys64. S-adenosyl-L-methionine is bound at residue Phe66. Cys67 is a binding site for [4Fe-4S] cluster. S-adenosyl-L-methionine-binding positions include Gly111, 112 to 113 (GT), Glu144, Gln171, Arg183, Asp208, Ala242, and Ile328.

The protein belongs to the anaerobic coproporphyrinogen-III oxidase family. Monomer. Requires [4Fe-4S] cluster as cofactor.

Its subcellular location is the cytoplasm. The catalysed reaction is coproporphyrinogen III + 2 S-adenosyl-L-methionine = protoporphyrinogen IX + 2 5'-deoxyadenosine + 2 L-methionine + 2 CO2. The protein operates within porphyrin-containing compound metabolism; protoporphyrin-IX biosynthesis; protoporphyrinogen-IX from coproporphyrinogen-III (AdoMet route): step 1/1. Involved in the heme biosynthesis. Catalyzes the anaerobic oxidative decarboxylation of propionate groups of rings A and B of coproporphyrinogen III to yield the vinyl groups in protoporphyrinogen IX. The sequence is that of Oxygen-independent coproporphyrinogen III oxidase (hemN) from Paracoccus denitrificans (strain Pd 1222).